The following is a 109-amino-acid chain: MKLSIIIIVTSLVIAVVAFPSKDSKAIENDKTEQRMEIVVQETARACSKQIGDKCKRNCECCGKTVVCGTIYVGGKEVNQCMDKTSDNAILNGLGKGMNFIENTFSFCV.

A signal peptide spans methionine 1–alanine 18. Positions phenylalanine 19–alanine 46 are excised as a propeptide. Cystine bridges form between cysteine 47-cysteine 62, cysteine 55-cysteine 68, cysteine 59-cysteine 108, and cysteine 61-cysteine 81.

The protein belongs to the neurotoxin 25 family. F7 subfamily. In terms of tissue distribution, expressed by the venom gland.

The protein localises to the secreted. Its function is as follows. Putative ion channel inhibitor. This chain is Hainantoxin-XVIII.2, found in Cyriopagopus hainanus (Chinese bird spider).